We begin with the raw amino-acid sequence, 339 residues long: Tetraacyldisaccharide 4'-kinase (339 aa).

44-51 (TVGGTGKT) is a binding site for ATP.

The protein belongs to the LpxK family.

The catalysed reaction is a lipid A disaccharide + ATP = a lipid IVA + ADP + H(+). Its pathway is glycolipid biosynthesis; lipid IV(A) biosynthesis; lipid IV(A) from (3R)-3-hydroxytetradecanoyl-[acyl-carrier-protein] and UDP-N-acetyl-alpha-D-glucosamine: step 6/6. Functionally, transfers the gamma-phosphate of ATP to the 4'-position of a tetraacyldisaccharide 1-phosphate intermediate (termed DS-1-P) to form tetraacyldisaccharide 1,4'-bis-phosphate (lipid IVA). In Bdellovibrio bacteriovorus (strain ATCC 15356 / DSM 50701 / NCIMB 9529 / HD100), this protein is Tetraacyldisaccharide 4'-kinase.